Consider the following 331-residue polypeptide: Major ferric iron-binding protein (331 aa).

The signal sequence occupies residues 1 to 22 (MKTSIRYALLAAALTAATPALA). His-31, Glu-79, Tyr-217, and Tyr-218 together coordinate Fe cation.

The protein belongs to the bacterial solute-binding protein 1 family.

It localises to the periplasm. Its function is as follows. This protein may be a central component in the iron-acquisition system. This is Major ferric iron-binding protein (fbpA) from Neisseria meningitidis serogroup A / serotype 4A (strain DSM 15465 / Z2491).